Reading from the N-terminus, the 465-residue chain is Phospholipase A1-II 5 (465 aa).

Ser-233 serves as the catalytic Acyl-ester intermediate. Residues Ser-233, Asp-297, and His-336 each act as charge relay system in the active site.

It belongs to the AB hydrolase superfamily. Lipase family.

The protein resides in the cytoplasm. Functionally, acylhydrolase that catalyzes the hydrolysis of phospholipids at the sn-1 position. This Oryza sativa subsp. indica (Rice) protein is Phospholipase A1-II 5.